We begin with the raw amino-acid sequence, 140 residues long: 3-hydroxyacyl-[acyl-carrier-protein] dehydratase FabZ (140 aa).

Residue His48 is part of the active site.

The protein belongs to the thioester dehydratase family. FabZ subfamily.

The protein localises to the cytoplasm. The enzyme catalyses a (3R)-hydroxyacyl-[ACP] = a (2E)-enoyl-[ACP] + H2O. Involved in unsaturated fatty acids biosynthesis. Catalyzes the dehydration of short chain beta-hydroxyacyl-ACPs and long chain saturated and unsaturated beta-hydroxyacyl-ACPs. The protein is 3-hydroxyacyl-[acyl-carrier-protein] dehydratase FabZ of Exiguobacterium sibiricum (strain DSM 17290 / CCUG 55495 / CIP 109462 / JCM 13490 / 255-15).